We begin with the raw amino-acid sequence, 179 residues long: Large ribosomal subunit protein uL10 (179 aa).

This sequence belongs to the universal ribosomal protein uL10 family. As to quaternary structure, part of the ribosomal stalk of the 50S ribosomal subunit. The N-terminus interacts with L11 and the large rRNA to form the base of the stalk. The C-terminus forms an elongated spine to which L12 dimers bind in a sequential fashion forming a multimeric L10(L12)X complex.

Its function is as follows. Forms part of the ribosomal stalk, playing a central role in the interaction of the ribosome with GTP-bound translation factors. The protein is Large ribosomal subunit protein uL10 of Thermotoga neapolitana (strain ATCC 49049 / DSM 4359 / NBRC 107923 / NS-E).